We begin with the raw amino-acid sequence, 1215 residues long: Zinc finger E-box-binding homeobox 2 (1215 aa).

The segment at 1 to 111 (MKQPIMADGP…ILQASVAGPE (111 aa)) is disordered. Residues 12 to 24 (CKRRKQANPRRKN) are compositionally biased toward basic residues. Polar residues predominate over residues 57–74 (DQDTSPASMPNHESSPHM). The segment covering 89-98 (RESVVEHSWH) has biased composition (basic and acidic residues). Serine 142 carries the post-translational modification Phosphoserine. 3 C2H2-type zinc fingers span residues 211-234 (LTCP…KYRH), 241-263 (FSCP…MVTH), and 282-304 (FKCT…LRIH). The C2H2-type 4; atypical zinc-finger motif lies at 310–334 (YECPNCKKRFSHSGSYSSHISSKKC). 3 positions are modified to phosphoserine: serine 356, serine 360, and serine 364. An N6-acetyllysine modification is found at lysine 377. A Glycyl lysine isopeptide (Lys-Gly) (interchain with G-Cter in SUMO); alternate cross-link involves residue lysine 391. Residue lysine 391 forms a Glycyl lysine isopeptide (Lys-Gly) (interchain with G-Cter in SUMO2); alternate linkage. The segment at 437–487 (QHLGVGMEAPLLGFPTMNSNLSEVQKVLQIVDNTVSRQKMDCKTEDISKLK) is SMAD-MH2 binding domain. Residues lysine 479 and lysine 555 each participate in a glycyl lysine isopeptide (Lys-Gly) (interchain with G-Cter in SUMO2) cross-link. The C2H2-type 5; degenerate zinc-finger motif lies at 581-605 (FSCQFCKESFPGPIPLHQHERYLCK). Residues lysine 611 and lysine 632 each participate in a glycyl lysine isopeptide (Lys-Gly) (interchain with G-Cter in SUMO2) cross-link. Positions 644-703 (GLTSPINPYKDHMSVLKAYYAMNMEPNSDELLKISIAVGLPQEFVKEWFEQRKVYQYSNS) form a DNA-binding region, homeobox; atypical. A Phosphoserine modification is found at serine 647. 2 disordered regions span residues 702–740 (NSRS…DSIT) and 772–811 (VDKL…SEEL). Lysine 713 participates in a covalent cross-link: Glycyl lysine isopeptide (Lys-Gly) (interchain with G-Cter in SUMO2). Residues serine 731 and serine 780 each carry the phosphoserine modification. Residues 780–808 (SNTPSPLNLSSTSSKNSHSSSYTPNSFSS) show a composition bias toward low complexity. Residue threonine 782 is modified to Phosphothreonine. Serine 784 is modified (phosphoserine). Residue lysine 866 forms a Glycyl lysine isopeptide (Lys-Gly) (interchain with G-Cter in SUMO); alternate linkage. A Glycyl lysine isopeptide (Lys-Gly) (interchain with G-Cter in SUMO2); alternate cross-link involves residue lysine 866. C2H2-type zinc fingers lie at residues 999-1021 (YACD…KYEH) and 1027-1049 (HQCQ…SRLH). A C2H2-type 8; atypical zinc finger spans residues 1055-1076 (YQCDKCGKRFSHSGSYSQHMNH). Positions 1117-1215 (TPQGYSDSEE…EEDNMEDGME (99 aa)) are disordered. Phosphoserine is present on residues serine 1122 and serine 1124. Residues 1127–1149 (RESMPRDGESEKEHEKEGEEGYG) are compositionally biased toward basic and acidic residues. The span at 1157–1167 (DEEEEEEEEES) shows a compositional bias: acidic residues. 2 stretches are compositionally biased toward basic and acidic residues: residues 1168 to 1179 (ENKSMDTDPETI) and 1186 to 1205 (GDHS…KSDH). Residue serine 1203 is modified to Phosphoserine. Residues 1206-1215 (EEDNMEDGME) are compositionally biased toward acidic residues.

The protein belongs to the delta-EF1/ZFH-1 C2H2-type zinc-finger family. As to quaternary structure, interacts with CBX4 and CTBP1. Binds activated SMAD1, activated SMAD2 and activated SMAD3; binding with SMAD4 is not detected. Sumoylation on Lys-391 and Lys-866 is promoted by the E3 SUMO-protein ligase CBX4, and impairs interaction with CTBP1 and transcription repression activity.

It is found in the nucleus. The protein localises to the chromosome. Functionally, transcriptional inhibitor that binds to DNA sequence 5'-CACCT-3' in different promoters. Represses transcription of E-cadherin. Represses expression of MEOX2. The protein is Zinc finger E-box-binding homeobox 2 (Zeb2) of Mus musculus (Mouse).